Consider the following 817-residue polypeptide: Nuclear hormone receptor family member nhr-48 (817 aa).

Residues 49–91 are disordered; that stretch reads YNDDKDDPFYEDEGSGGGTSGGGKKSSRKRANTTSSSGGNEKE. A compositionally biased stretch (acidic residues) spans 52-62; it reads DKDDPFYEDEG. Residues 63–72 show a composition bias toward gly residues; sequence SGGGTSGGGK. Residues 97 to 172 constitute a DNA-binding region (nuclear receptor); it reads NKVCRVCGDK…VGMKKEWIMS (76 aa). 2 NR C4-type zinc fingers span residues 100 to 120 and 136 to 155; these read CRVC…CESC and CPFN…CQRC. The segment covering 202-212 has biased composition (acidic residues); the sequence is ACMEDESENSY. Disordered stretches follow at residues 202-221 and 258-284; these read ACME…PSHQ and MNFY…SSQL. The segment covering 273 to 284 has biased composition (polar residues); sequence LPSNSCASSSQL.

It belongs to the nuclear hormone receptor family.

The protein localises to the nucleus. In terms of biological role, orphan nuclear receptor. This Caenorhabditis elegans protein is Nuclear hormone receptor family member nhr-48 (nhr-48).